A 157-amino-acid polypeptide reads, in one-letter code: Protein BeeE (157 aa).

Belongs to the phage portal family.

This is Protein BeeE (beeE) from Escherichia coli (strain K12).